A 257-amino-acid polypeptide reads, in one-letter code: Phosphate import ATP-binding protein PstB (257 aa).

An ABC transporter domain is found at 4–246 (LKLNDVNIYY…KKIFENPDQK (243 aa)). An ATP-binding site is contributed by 36–43 (GPSGCGKS).

Belongs to the ABC transporter superfamily. Phosphate importer (TC 3.A.1.7) family. The complex is composed of two ATP-binding proteins (PstB), two transmembrane proteins (PstC and PstA) and a solute-binding protein (PstS).

The protein resides in the cell membrane. The enzyme catalyses phosphate(out) + ATP + H2O = ADP + 2 phosphate(in) + H(+). In terms of biological role, part of the ABC transporter complex PstSACB involved in phosphate import. Responsible for energy coupling to the transport system. The polypeptide is Phosphate import ATP-binding protein PstB (Corynebacterium glutamicum (strain ATCC 13032 / DSM 20300 / JCM 1318 / BCRC 11384 / CCUG 27702 / LMG 3730 / NBRC 12168 / NCIMB 10025 / NRRL B-2784 / 534)).